The chain runs to 87 residues: Probable acyl carrier protein PigG (87 aa).

One can recognise a Carrier domain in the interval 1–78; that stretch reads MLESKLINHI…SMVALVQRLK (78 aa). Ser36 carries the O-(pantetheine 4'-phosphoryl)serine modification.

Its pathway is antibiotic biosynthesis; prodigiosin biosynthesis. Its function is as follows. Involved in the biosynthesis of 4-methoxy-2,2'-bipyrrole-5-carbaldehyde (MBC), one of the terminal products involved in the biosynthesis of the red antibiotic prodigiosin (Pig). Carrier of the L-prolyl group transferred from L-prolyl-AMP by PigI. The sequence is that of Probable acyl carrier protein PigG from Serratia sp. (strain ATCC 39006) (Prodigiosinella confusarubida).